We begin with the raw amino-acid sequence, 143 residues long: Oxoglutarate dehydrogenase inhibitor (143 aa).

A Phosphothreonine modification is found at T14. Low complexity predominate over residues 29–38; sequence GAGAATASGS. The segment at 29-50 is disordered; the sequence is GAGAATASGSDVTPPAGAGMLV. The 50-residue stretch at 68–117 folds into the FHA domain; the sequence is TTAGRHPESDIFLDDVTVSRRHAEFRRQDGSFEVVDVGSLNGTYVNREPR.

Its subcellular location is the cytoplasm. An essential component of the PknG signaling pathway. When unphosphorylated, it inhibits the activity of 2-oxoglutarate dehydrogenase. When phosphorylated it does not inhibit 2-oxoglutarate dehydrogenase. This Corynebacterium diphtheriae (strain ATCC 700971 / NCTC 13129 / Biotype gravis) protein is Oxoglutarate dehydrogenase inhibitor (odhI).